Here is a 427-residue protein sequence, read N- to C-terminus: Histidinol dehydrogenase (427 aa).

NAD(+)-binding residues include Y123, Q185, and N208. The substrate site is built by S231, Q253, and H256. Residues Q253 and H256 each contribute to the Zn(2+) site. Catalysis depends on proton acceptor residues E321 and H322. Residues H322, D355, E409, and H414 each contribute to the substrate site. D355 serves as a coordination point for Zn(2+). H414 contributes to the Zn(2+) binding site.

Belongs to the histidinol dehydrogenase family. Requires Zn(2+) as cofactor.

It carries out the reaction L-histidinol + 2 NAD(+) + H2O = L-histidine + 2 NADH + 3 H(+). It functions in the pathway amino-acid biosynthesis; L-histidine biosynthesis; L-histidine from 5-phospho-alpha-D-ribose 1-diphosphate: step 9/9. In terms of biological role, catalyzes the sequential NAD-dependent oxidations of L-histidinol to L-histidinaldehyde and then to L-histidine. The protein is Histidinol dehydrogenase of Oceanobacillus iheyensis (strain DSM 14371 / CIP 107618 / JCM 11309 / KCTC 3954 / HTE831).